Here is a 95-residue protein sequence, read N- to C-terminus: FXYD domain-containing ion transport regulator 6 (95 aa).

An N-terminal signal peptide occupies residues 1–18 (MELVLVFLCSLLAPMVLA). The Extracellular portion of the chain corresponds to 19-35 (SAAEKEKEMDPFHYDYQ). A helical transmembrane segment spans residues 36-57 (TLRIGGLVFAVVLFSVGILLIL). Residues 58–95 (SRRCKCSFNQKPRAPGDEEAQVENLITANATEPQKAEN) are Cytoplasmic-facing. Residues 69–95 (PRAPGDEEAQVENLITANATEPQKAEN) form a disordered region.

It belongs to the FXYD family. In terms of assembly, regulatory subunit of the sodium/potassium-transporting ATPase which is composed of a catalytic alpha subunit, a non-catalytic beta subunit and an additional regulatory subunit. The regulatory subunit, a member of the FXYD protein family, modulates the enzymatic activity in a tissue- and isoform-specific way by changing affinities of the Na+/K+-ATPase toward Na(+), K(+) or ATP.

Its subcellular location is the cell membrane. In terms of biological role, associates with and regulates the activity of the sodium/potassium-transporting ATPase (NKA) which catalyzes the hydrolysis of ATP coupled with the exchange of Na(+) and K(+) ions across the plasma membrane. Reduces the apparent affinity for intracellular Na(+) with no change in the apparent affinity for extracellular K(+). In addition to modulating NKA kinetics, may also function as a regulator of NKA localization to the plasma membrane. In Homo sapiens (Human), this protein is FXYD domain-containing ion transport regulator 6.